The sequence spans 218 residues: Glutathione S-transferase class-mu 26 kDa isozyme (218 aa).

One can recognise a GST N-terminal domain in the interval 2-83; sequence SPILGYWKIK…YIADKHNMLG (82 aa). Glutathione is bound by residues 7-8, 41-45, 54-55, and 67-68; these read YW, WRNKK, NL, and QS. Residues 85–203 form the GST C-terminal domain; the sequence is CPKERAEISM…KSSKYIAWPL (119 aa). Tyr-111 contacts substrate.

The protein belongs to the GST superfamily. Mu family. Homodimer.

The catalysed reaction is RX + glutathione = an S-substituted glutathione + a halide anion + H(+). Its function is as follows. Conjugation of reduced glutathione to a wide number of exogenous and endogenous hydrophobic electrophiles. GST isoenzymes appear to play a central role in the parasite detoxification system. Other functions are also suspected including a role in increasing the solubility of haematin in the parasite gut. This Schistosoma japonicum (Blood fluke) protein is Glutathione S-transferase class-mu 26 kDa isozyme.